The following is a 128-amino-acid chain: UPF0102 protein PSPTO_4420 (128 aa).

The protein belongs to the UPF0102 family.

This Pseudomonas syringae pv. tomato (strain ATCC BAA-871 / DC3000) protein is UPF0102 protein PSPTO_4420.